Reading from the N-terminus, the 248-residue chain is 1-(5-phosphoribosyl)-5-[(5-phosphoribosylamino)methylideneamino] imidazole-4-carboxamide isomerase (248 aa).

Residue aspartate 11 is the Proton acceptor of the active site. The active-site Proton donor is the aspartate 132.

This sequence belongs to the HisA/HisF family.

Its subcellular location is the cytoplasm. The enzyme catalyses 1-(5-phospho-beta-D-ribosyl)-5-[(5-phospho-beta-D-ribosylamino)methylideneamino]imidazole-4-carboxamide = 5-[(5-phospho-1-deoxy-D-ribulos-1-ylimino)methylamino]-1-(5-phospho-beta-D-ribosyl)imidazole-4-carboxamide. The protein operates within amino-acid biosynthesis; L-histidine biosynthesis; L-histidine from 5-phospho-alpha-D-ribose 1-diphosphate: step 4/9. The sequence is that of 1-(5-phosphoribosyl)-5-[(5-phosphoribosylamino)methylideneamino] imidazole-4-carboxamide isomerase from Afipia carboxidovorans (strain ATCC 49405 / DSM 1227 / KCTC 32145 / OM5) (Oligotropha carboxidovorans).